The primary structure comprises 160 residues: Large ribosomal subunit protein uL11 (160 aa).

Belongs to the universal ribosomal protein uL11 family. Part of the ribosomal stalk of the 50S ribosomal subunit. Interacts with L10 and the large rRNA to form the base of the stalk. L10 forms an elongated spine to which L12 dimers bind in a sequential fashion forming a multimeric L10(L12)X complex.

Forms part of the ribosomal stalk which helps the ribosome interact with GTP-bound translation factors. This chain is Large ribosomal subunit protein uL11, found in Nanoarchaeum equitans (strain Kin4-M).